The sequence spans 83 residues: High-potential iron-sulfur protein (83 aa).

The [4Fe-4S] cluster site is built by Cys-43, Cys-46, Cys-61, and Cys-75.

Belongs to the high-potential iron-sulfur protein (HiPIP) family. In terms of assembly, homodimer.

It localises to the periplasm. Functionally, specific class of high-redox-potential 4Fe-4S ferredoxins. Functions in anaerobic electron transport in most purple and in some other photosynthetic bacteria and in at least one genus (Paracoccus) of halophilic, denitrifying bacteria. This Thiocystis violacea protein is High-potential iron-sulfur protein.